The following is a 526-amino-acid chain: tRNA modification GTPase MSS1, mitochondrial (526 aa).

Residues 1–19 (MNSASFLQSRLISRSFLVR) constitute a mitochondrion transit peptide. The 171-residue stretch at 274 to 444 (GIKLVLLGAP…LISTLTSNFE (171 aa)) folds into the TrmE-type G domain. GTP is bound by residues 281–288 (GAPNVGKS), 328–332 (DTAGI), and 394–397 (NKSD).

Belongs to the TRAFAC class TrmE-Era-EngA-EngB-Septin-like GTPase superfamily. TrmE GTPase family. Forms a heterodimer with MTO1.

The protein resides in the mitochondrion. Its function is as follows. GTPase involved in the 5-carboxymethylaminomethyl modification (mnm(5)s(2)U34) of the wobble uridine base in mitochondrial tRNAs. Involved in the expression of cytochrome c oxidase subunit 1 (COX1). Works in association with the small subunit of mitoribosomes. This Saccharomyces cerevisiae (strain ATCC 204508 / S288c) (Baker's yeast) protein is tRNA modification GTPase MSS1, mitochondrial (MSS1).